The following is a 93-amino-acid chain: YcgL domain-containing protein VFMJ11_1829 (93 aa).

The 84-residue stretch at 1–84 folds into the YcgL domain; it reads MFCSIYKSTK…PPENLLEKYK (84 aa).

This Aliivibrio fischeri (strain MJ11) (Vibrio fischeri) protein is YcgL domain-containing protein VFMJ11_1829.